We begin with the raw amino-acid sequence, 799 residues long: Putative aconitate hydratase, mitochondrial (799 aa).

A mitochondrion-targeting transit peptide spans 1 to 32; sequence MVRQLVWQRATASRRLAPKCLSPQQLFARRGL. Substrate is bound by residues Gln-108 and 201–203; that span reads DSH. [4Fe-4S] cluster is bound by residues Cys-399, Cys-462, and Cys-465. Residues Arg-489 and Arg-494 each coordinate substrate. The tract at residues 538–564 is disordered; the sequence is KFRPPQGSDLPSAGFADGNPALQPSAG. 685-686 serves as a coordination point for substrate; the sequence is AR.

It belongs to the aconitase/IPM isomerase family.

Its subcellular location is the mitochondrion. Has no detectable activity towards cis-acontiate or cis-homoaconitate. The chain is Putative aconitate hydratase, mitochondrial (acoB) from Aspergillus fumigatus (strain ATCC MYA-4609 / CBS 101355 / FGSC A1100 / Af293) (Neosartorya fumigata).